The following is a 447-amino-acid chain: ATP-dependent protease ATPase subunit HslU (447 aa).

Residues isoleucine 18, 60-65 (GVGKTE), aspartate 259, glutamate 325, and arginine 397 contribute to the ATP site.

This sequence belongs to the ClpX chaperone family. HslU subfamily. A double ring-shaped homohexamer of HslV is capped on each side by a ring-shaped HslU homohexamer. The assembly of the HslU/HslV complex is dependent on binding of ATP.

The protein localises to the cytoplasm. In terms of biological role, ATPase subunit of a proteasome-like degradation complex; this subunit has chaperone activity. The binding of ATP and its subsequent hydrolysis by HslU are essential for unfolding of protein substrates subsequently hydrolyzed by HslV. HslU recognizes the N-terminal part of its protein substrates and unfolds these before they are guided to HslV for hydrolysis. This chain is ATP-dependent protease ATPase subunit HslU, found in Burkholderia ambifaria (strain ATCC BAA-244 / DSM 16087 / CCUG 44356 / LMG 19182 / AMMD) (Burkholderia cepacia (strain AMMD)).